Consider the following 335-residue polypeptide: DNA-directed RNA polymerase subunit alpha (335 aa).

Positions 1–233 (MQRNWRELIK…DQLTIFINFE (233 aa)) are alpha N-terminal domain (alpha-NTD). The segment at 249–335 (FNDHLFRSVD…DIENRRKEQE (87 aa)) is alpha C-terminal domain (alpha-CTD).

Belongs to the RNA polymerase alpha chain family. Homodimer. The RNAP catalytic core consists of 2 alpha, 1 beta, 1 beta' and 1 omega subunit. When a sigma factor is associated with the core the holoenzyme is formed, which can initiate transcription.

It carries out the reaction RNA(n) + a ribonucleoside 5'-triphosphate = RNA(n+1) + diphosphate. In terms of biological role, DNA-dependent RNA polymerase catalyzes the transcription of DNA into RNA using the four ribonucleoside triphosphates as substrates. The chain is DNA-directed RNA polymerase subunit alpha from Syntrophobacter fumaroxidans (strain DSM 10017 / MPOB).